A 261-amino-acid chain; its full sequence is Small ribosomal subunit protein eS4z (261 aa).

The S4 RNA-binding domain occupies 42–104 (LPLVLIIRNR…TNENFRLLYD (63 aa)).

This sequence belongs to the eukaryotic ribosomal protein eS4 family.

The protein resides in the cytoplasm. In Arabidopsis thaliana (Mouse-ear cress), this protein is Small ribosomal subunit protein eS4z (RPS4A).